The chain runs to 941 residues: UvrABC system protein A (941 aa).

37 to 44 lines the ATP pocket; it reads GLSGSGKS. The C4-type zinc finger occupies 260–287; that stretch reads CFKCKMSFEELEPLSFSFNSPKGACESC. 2 ABC transporter domains span residues 316–585 and 605–937; these read IFGY…NNHS and KEKH…KFLA. 637-644 contacts ATP; sequence GVSGSGKS. The C4-type zinc-finger motif lies at 737–763; sequence CEKCQGDGDIKIEMHFLPDVLVQCDSC.

It belongs to the ABC transporter superfamily. UvrA family. In terms of assembly, forms a heterotetramer with UvrB during the search for lesions.

Its subcellular location is the cytoplasm. Its function is as follows. The UvrABC repair system catalyzes the recognition and processing of DNA lesions. UvrA is an ATPase and a DNA-binding protein. A damage recognition complex composed of 2 UvrA and 2 UvrB subunits scans DNA for abnormalities. When the presence of a lesion has been verified by UvrB, the UvrA molecules dissociate. This Helicobacter pylori (strain J99 / ATCC 700824) (Campylobacter pylori J99) protein is UvrABC system protein A.